A 229-amino-acid chain; its full sequence is Prolactin (229 aa).

The N-terminal stretch at 1 to 30 (MDNKGWSLKGSLLFLLLLLSDLLLCKSVAS) is a signal peptide. Cys-34 and Cys-41 are disulfide-bonded. A Phosphoserine modification is found at Ser-56. An N-linked (GlcNAc...) asparagine glycan is attached at Asn-61. Phosphoserine occurs at positions 64 and 120. Disulfide bonds link Cys-88-Cys-204 and Cys-221-Cys-229.

It belongs to the somatotropin/prolactin family. Interacts with PRLR.

Its subcellular location is the secreted. Prolactin acts primarily on the mammary gland by promoting lactation. This Felis catus (Cat) protein is Prolactin (PRL).